The primary structure comprises 215 residues: Probable transaldolase (215 aa).

The active-site Schiff-base intermediate with substrate is the lysine 83.

This sequence belongs to the transaldolase family. Type 3B subfamily.

The protein localises to the cytoplasm. The catalysed reaction is D-sedoheptulose 7-phosphate + D-glyceraldehyde 3-phosphate = D-erythrose 4-phosphate + beta-D-fructose 6-phosphate. The protein operates within carbohydrate degradation; pentose phosphate pathway; D-glyceraldehyde 3-phosphate and beta-D-fructose 6-phosphate from D-ribose 5-phosphate and D-xylulose 5-phosphate (non-oxidative stage): step 2/3. In terms of biological role, transaldolase is important for the balance of metabolites in the pentose-phosphate pathway. This Anaeromyxobacter sp. (strain Fw109-5) protein is Probable transaldolase.